We begin with the raw amino-acid sequence, 258 residues long: Spindlin-2 (258 aa).

Residues 1-47 (MKTPHKKATARQQTREIVDDHTLSASMRKKKISQKKQRGRPSSQTRR) are disordered. Residues 13 to 22 (QTREIVDDHT) are compositionally biased toward basic and acidic residues. Over residues 27-39 (MRKKKISQKKQRG) the composition is skewed to basic residues. Tudor-like domain regions lie at residues 50–99 (VGCR…LELH), 129–178 (IGKA…YQLL), and 210–255 (IGKH…YDLV). 2 histone H3K4me3 and H3R8me2a binding regions span residues Glu-138 and 246–248 (DFH).

Belongs to the SPIN/STSY family. As to quaternary structure, interacts with C11orf84/SPINDOC.

It localises to the nucleus. May be involved in the regulation of cell cycle progression. Exhibits H3K4me3-binding activity. The sequence is that of Spindlin-2 (SPIN2) from Bos taurus (Bovine).